The sequence spans 119 residues: Holo-[acyl-carrier-protein] synthase (119 aa).

The Mg(2+) site is built by Asp-8 and Glu-58.

It belongs to the P-Pant transferase superfamily. AcpS family. Mg(2+) is required as a cofactor.

It localises to the cytoplasm. It carries out the reaction apo-[ACP] + CoA = holo-[ACP] + adenosine 3',5'-bisphosphate + H(+). Its function is as follows. Transfers the 4'-phosphopantetheine moiety from coenzyme A to a Ser of acyl-carrier-protein. The protein is Holo-[acyl-carrier-protein] synthase of Bacillus cereus (strain ATCC 10987 / NRS 248).